A 205-amino-acid chain; its full sequence is Imidazole glycerol phosphate synthase subunit HisH (205 aa).

The region spanning 3 to 205 (KIGLIDYGMG…LLRRWIKSIQ (203 aa)) is the Glutamine amidotransferase type-1 domain. The active-site Nucleophile is the cysteine 81. Catalysis depends on residues histidine 185 and glutamate 187.

In terms of assembly, heterodimer of HisH and HisF.

Its subcellular location is the cytoplasm. It carries out the reaction 5-[(5-phospho-1-deoxy-D-ribulos-1-ylimino)methylamino]-1-(5-phospho-beta-D-ribosyl)imidazole-4-carboxamide + L-glutamine = D-erythro-1-(imidazol-4-yl)glycerol 3-phosphate + 5-amino-1-(5-phospho-beta-D-ribosyl)imidazole-4-carboxamide + L-glutamate + H(+). The catalysed reaction is L-glutamine + H2O = L-glutamate + NH4(+). It functions in the pathway amino-acid biosynthesis; L-histidine biosynthesis; L-histidine from 5-phospho-alpha-D-ribose 1-diphosphate: step 5/9. Its function is as follows. IGPS catalyzes the conversion of PRFAR and glutamine to IGP, AICAR and glutamate. The HisH subunit catalyzes the hydrolysis of glutamine to glutamate and ammonia as part of the synthesis of IGP and AICAR. The resulting ammonia molecule is channeled to the active site of HisF. The polypeptide is Imidazole glycerol phosphate synthase subunit HisH (Prochlorococcus marinus subsp. pastoris (strain CCMP1986 / NIES-2087 / MED4)).